Here is a 268-residue protein sequence, read N- to C-terminus: Magnesium dechelatase SGR1, chloroplastic (268 aa).

Residues 1–48 constitute a chloroplast transit peptide; sequence MCSLSAIMLLPTKLKPAYSDKRSNSSSSSSLFFNNRRSKKKNQSIVPV.

This sequence belongs to the staygreen family. In terms of assembly, interacts with HCAR, the chlorophyll catabolic enzymes (CCEs) NYC1, PAO and RCCR, and the LHCII complex. Part of a SGR1-CCE-LHCII complex, which acts in chlorophyll breakdown. Expressed in roots, leaves, seeds, flowers, buds, petals, sepals and siliques.

It localises to the plastid. The protein localises to the chloroplast thylakoid membrane. It catalyses the reaction chlorophyll a + 2 H(+) = pheophytin a + Mg(2+). Magnesium chelatase involved in chlorophyll a degradation in the chlorophyll-protein complexes of photosystem I (PSI) and photosystem II (PSII). Contributes to the degradation of PSI and PSII in the thylakoid membranes. Required to trigger chlorophyll degradation during natural and dark-induced leaf senescence. Mediates chlorophyll degradation during embryo degreening. Recombinant SGR1 possesses high dechelating activity against chlorophyll a, very low activity against chlorophyllide a, and no activity against chlorophyll b. Magnesium dechelation of chlorophyll a by SGR1 activates chlorophyll b degradation by inducing the expression of NYC1, an enzyme involved in chlorophyll b degradation. The protein is Magnesium dechelatase SGR1, chloroplastic of Arabidopsis thaliana (Mouse-ear cress).